The sequence spans 286 residues: Shikimate dehydrogenase (NADP(+)) (286 aa).

Shikimate-binding positions include 22–24 (SRS) and Thr71. Catalysis depends on Lys75, which acts as the Proton acceptor. Glu87 contributes to the NADP(+) binding site. Residues Asn96 and Asp111 each contribute to the shikimate site. Residues 136–140 (GAGGA), 160–165 (NRTPER), and Ile225 each bind NADP(+). Tyr227 is a binding site for shikimate. Gly248 contacts NADP(+).

This sequence belongs to the shikimate dehydrogenase family. In terms of assembly, homodimer.

The catalysed reaction is shikimate + NADP(+) = 3-dehydroshikimate + NADPH + H(+). Its pathway is metabolic intermediate biosynthesis; chorismate biosynthesis; chorismate from D-erythrose 4-phosphate and phosphoenolpyruvate: step 4/7. Its function is as follows. Involved in the biosynthesis of the chorismate, which leads to the biosynthesis of aromatic amino acids. Catalyzes the reversible NADPH linked reduction of 3-dehydroshikimate (DHSA) to yield shikimate (SA). In Sinorhizobium medicae (strain WSM419) (Ensifer medicae), this protein is Shikimate dehydrogenase (NADP(+)).